Here is a 338-residue protein sequence, read N- to C-terminus: Solute carrier family 35 member G3 (338 aa).

Residues 1–24 (MAGSHPYFNQPDSTHPSPPSAPPS) form a disordered region. 9 helical membrane passes run 37-57 (TSGL…VGPL), 67-87 (LPSL…ALLL), 105-125 (FFCA…VQVV), 160-180 (CGLL…LWTL), 185-205 (TGVY…ALSL), 221-241 (TVAF…LFVL), 250-270 (LLSW…FTCV), 281-301 (LVCA…YYML), and 305-325 (VAPS…IITA). The EamA 1 domain occupies 49 to 174 (LPAGFVGPLS…CILGLIIIVG (126 aa)). An EamA 2 domain is found at 272–325 (YAVTKAHPALVCAVLHSEVVVALILQYYMLHETVAPSDIVAAGVVLGSIAIITA).

Belongs to the SLC35G solute transporter family. In terms of tissue distribution, expressed in testis.

The protein resides in the membrane. This Homo sapiens (Human) protein is Solute carrier family 35 member G3 (SLC35G3).